We begin with the raw amino-acid sequence, 313 residues long: Putative glycosyltransferase ORF313 (313 aa).

It belongs to the glycosyltransferase group 1 family. Glycosyltransferase 4 subfamily.

In Acidianus hospitalis (AFV-1), this protein is Putative glycosyltransferase ORF313.